A 319-amino-acid chain; its full sequence is Ubiquinone biosynthesis protein COQ4, mitochondrial (319 aa).

A mitochondrion-targeting transit peptide spans 1-28; the sequence is MISRSIFSKSVSLQRSQNRSFLLTAASA. The Zn(2+) site is built by H205, D206, H209, and E221.

This sequence belongs to the COQ4 family. In terms of assembly, component of a multi-subunit COQ enzyme complex, composed of at least COQ3, COQ4, COQ5, COQ6, COQ7 and COQ9. Zn(2+) is required as a cofactor.

It localises to the mitochondrion inner membrane. It carries out the reaction a 4-hydroxy-3-methoxy-5-(all-trans-polyprenyl)benzoate + H(+) = a 2-methoxy-6-(all-trans-polyprenyl)phenol + CO2. It participates in cofactor biosynthesis; ubiquinone biosynthesis. Functionally, lyase that catalyzes the C1-decarboxylation of 4-hydroxy-3-methoxy-5-(all-trans-polyprenyl)benzoic acid into 2-methoxy-6-(all-trans-polyprenyl)phenol during ubiquinone biosynthesis. This Clavispora lusitaniae (strain ATCC 42720) (Yeast) protein is Ubiquinone biosynthesis protein COQ4, mitochondrial.